Consider the following 228-residue polypeptide: L-ribulose-5-phosphate 4-epimerase UlaF (228 aa).

Substrate-binding positions include 26–27, 43–44, and 72–73; these read GN, SG, and SS. Residues Asp74, His93, and His95 each coordinate Zn(2+). Asp118 serves as the catalytic Proton donor/acceptor. A Zn(2+)-binding site is contributed by His167. Residue Tyr225 is the Proton donor/acceptor of the active site.

It belongs to the aldolase class II family. AraD/FucA subfamily. Zn(2+) is required as a cofactor.

The catalysed reaction is L-ribulose 5-phosphate = D-xylulose 5-phosphate. It participates in cofactor degradation; L-ascorbate degradation; D-xylulose 5-phosphate from L-ascorbate: step 4/4. In terms of biological role, catalyzes the isomerization of L-ribulose 5-phosphate to D-xylulose 5-phosphate. Is involved in the anaerobic L-ascorbate utilization. This Escherichia coli O6:K15:H31 (strain 536 / UPEC) protein is L-ribulose-5-phosphate 4-epimerase UlaF.